Here is an 81-residue protein sequence, read N- to C-terminus: MEAIVSAASVIAAGLAVGLAAIGPGIGQGSAAANAVEGLARQPEAEGKIRGTLLLSLAFMESLTIYGLVVALSLLFANPFS.

2 consecutive transmembrane segments (helical) span residues 3 to 23 (AIVSAASVIAAGLAVGLAAIG) and 57 to 77 (LAFMESLTIYGLVVALSLLFA).

This sequence belongs to the ATPase C chain family. As to quaternary structure, F-type ATPases have 2 components, F(1) - the catalytic core - and F(0) - the membrane proton channel. F(1) has five subunits: alpha(3), beta(3), gamma(1), delta(1), epsilon(1). F(0) has four main subunits: a(1), b(1), b'(1) and c(10-14). The alpha and beta chains form an alternating ring which encloses part of the gamma chain. F(1) is attached to F(0) by a central stalk formed by the gamma and epsilon chains, while a peripheral stalk is formed by the delta, b and b' chains.

Its subcellular location is the plastid. The protein resides in the chloroplast thylakoid membrane. Its function is as follows. F(1)F(0) ATP synthase produces ATP from ADP in the presence of a proton or sodium gradient. F-type ATPases consist of two structural domains, F(1) containing the extramembraneous catalytic core and F(0) containing the membrane proton channel, linked together by a central stalk and a peripheral stalk. During catalysis, ATP synthesis in the catalytic domain of F(1) is coupled via a rotary mechanism of the central stalk subunits to proton translocation. In terms of biological role, key component of the F(0) channel; it plays a direct role in translocation across the membrane. A homomeric c-ring of between 10-14 subunits forms the central stalk rotor element with the F(1) delta and epsilon subunits. This Cyanidioschyzon merolae (strain NIES-3377 / 10D) (Unicellular red alga) protein is ATP synthase subunit c, chloroplastic.